The following is a 64-amino-acid chain: Large ribosomal subunit protein bL35 (64 aa).

Positions 1–28 are enriched in basic residues; sequence MSKAKTHSGAAKRFKKTASGYKHKHAFK. A disordered region spans residues 1–51; the sequence is MSKAKTHSGAAKRFKKTASGYKHKHAFKSHILTKMTTKRKRQLRGTSLLNA.

It belongs to the bacterial ribosomal protein bL35 family.

The chain is Large ribosomal subunit protein bL35 from Saccharophagus degradans (strain 2-40 / ATCC 43961 / DSM 17024).